A 271-amino-acid chain; its full sequence is MPALDDIKSSWADEVESDSGSLPPPSEVIENGQKIVTEYKYNKDDKKVKVVRTYKISRVVVPKCVARRKSLAKFGDSATDRPGPNPQTTMVSEDVFMQFITNKEEEQKNENALDSMKNIVKCRTCEGEHWSFHCPYKNSAYDKPTKPTTAPVPETTSSSKPGKYVPPHMKESQGKPGIGGAMRGRDDTSAIRISNLSEAMTEADLEELVKKFGPHTKMFLSRDKSTGLCKGFAYVHFRSRRDAATAIEVLNGYGYDHLILSVEWSKPQNPQ.

Disordered stretches follow at residues M1–I29 and K143–R185. The 79-residue stretch at S189 to P267 folds into the RRM domain.

Belongs to the eIF-3 subunit G family. As to quaternary structure, component of the eukaryotic translation initiation factor 3 (eIF-3) complex.

It localises to the cytoplasm. Functionally, RNA-binding component of the eukaryotic translation initiation factor 3 (eIF-3) complex, which is involved in protein synthesis of a specialized repertoire of mRNAs and, together with other initiation factors, stimulates binding of mRNA and methionyl-tRNAi to the 40S ribosome. The eIF-3 complex specifically targets and initiates translation of a subset of mRNAs involved in cell proliferation. This subunit can bind 18S rRNA. The protein is Eukaryotic translation initiation factor 3 subunit G of Anopheles gambiae (African malaria mosquito).